Reading from the N-terminus, the 491-residue chain is Ribulose-1,5 bisphosphate carboxylase/oxygenase large subunit N-methyltransferase, chloroplastic (491 aa).

The SET domain maps to 67-291 (EGVVTTKTPV…AGDQLFIQYD (225 aa)).

This sequence belongs to the class V-like SAM-binding methyltransferase superfamily. Plant protein-lysine LSMT methyltransferase family.

The protein localises to the plastid. It is found in the chloroplast. It carries out the reaction L-lysyl-[ribulose-1,5-bisphosphate carboxylase] + 3 S-adenosyl-L-methionine = N(6),N(6),N(6)-trimethyl-L-lysyl-[ribulose-1,5-bisphosphate carboxylase] + 3 S-adenosyl-L-homocysteine + 3 H(+). In terms of biological role, methylates 'Lys-14' of the large subunit of RuBisCO. The protein is Ribulose-1,5 bisphosphate carboxylase/oxygenase large subunit N-methyltransferase, chloroplastic (RBCMT) of Nicotiana tabacum (Common tobacco).